The sequence spans 102 residues: Small ribosomal subunit protein uS10 (102 aa).

Belongs to the universal ribosomal protein uS10 family. In terms of assembly, part of the 30S ribosomal subunit.

In terms of biological role, involved in the binding of tRNA to the ribosomes. The chain is Small ribosomal subunit protein uS10 from Methanosphaera stadtmanae (strain ATCC 43021 / DSM 3091 / JCM 11832 / MCB-3).